The sequence spans 102 residues: Carboxysome shell protein CcmK2 (102 aa).

Residues 4 to 90 (AVGMIETLGF…PHENLEYVLP (87 aa)) enclose the BMC domain.

Belongs to the bacterial microcompartments protein family. CcmK subfamily. Homohexamer. Interacts with CcmO in the carboxysome. Interacts with CcmN.

The protein resides in the carboxysome. One of the shell proteins of the carboxysome, a polyhedral inclusion where RuBisCO (ribulose bisphosphate carboxylase, rbcL-rbcS) is sequestered. Assembles into hexamers which make sheets that form the facets of the polyhedral carboxysome. The hexamer central pore probably regulates metabolite flux. Its function is as follows. The major shell protein of the carboxysome, a polyhedral inclusion where RuBisCO (ribulose bisphosphate carboxylase, rbcL-rbcS) is sequestered. Hexamers make sheets that form the facets of the polyhedral carboxysome. The shell is 4.5 nm thick, as observed for CcmK hexamers. Required for recruitment of CcmO to the pre-carboxysome. In PCC 7942 there are several CcmK paralogs with presumably functional differences; replacing the central pore residues (34-37) with those of either CcmK4 from this organism (Tyr-Met-Arg-Ala) or from an alpha-type carboxysome forming cyanobacterium (CsoS1 of P.marinus strain MIT 9313, Arg-Glu-Phe-Val) allows the bacterium to make carboxysomes, but the expression level is too low to know if the carboxysome is functional for CO(2) fixation. In terms of biological role, beta-carboxysome assembly initiates when soluble RuBisCO is condensed into a liquid matrix in a pre-carboxysome by the RbcS-like domains of probably both CcmM58 and CcmM35. CcmN interacts with the N-terminus of CcmM58, and then recruits the CcmK2 major shell protein via CcmN's encapsulation peptide. Shell formation requires CcmK proteins and CcmO. CcmL caps the otherwise elongated carboxysome. Once fully encapsulated carboxysomes are formed, they migrate within the cell probably via interactions with the cytoskeleton. The polypeptide is Carboxysome shell protein CcmK2 (Synechococcus elongatus (strain ATCC 33912 / PCC 7942 / FACHB-805) (Anacystis nidulans R2)).